The primary structure comprises 359 residues: Pyruvate dehydrogenase E1 component subunit beta, mitochondrial (359 aa).

The N-terminal 30 residues, 1 to 30 (MAAVSGLVRRPLREVSRLLKRRFHWTAPAA), are a transit peptide targeting the mitochondrion. Tyrosine 67 carries the phosphotyrosine modification. Residue glutamate 89 coordinates thiamine diphosphate. K(+)-binding residues include isoleucine 142, alanine 190, isoleucine 191, aspartate 193, and asparagine 195. The residue at position 354 (lysine 354) is an N6-acetyllysine.

In terms of assembly, heterotetramer of two PDHA1 and two PDHB subunits. The heterotetramer interacts with DLAT, and is part of the multimeric pyruvate dehydrogenase complex that contains multiple copies of pyruvate dehydrogenase (E1), dihydrolipoamide acetyltransferase (DLAT, E2) and lipoamide dehydrogenase (DLD, E3). These subunits are bound to an inner core composed of about 48 DLAT and 12 PDHX molecules. Interacts with DLAT. It depends on thiamine diphosphate as a cofactor.

The protein resides in the mitochondrion matrix. It carries out the reaction N(6)-[(R)-lipoyl]-L-lysyl-[protein] + pyruvate + H(+) = N(6)-[(R)-S(8)-acetyldihydrolipoyl]-L-lysyl-[protein] + CO2. In terms of biological role, the pyruvate dehydrogenase complex catalyzes the overall conversion of pyruvate to acetyl-CoA and CO(2), and thereby links the glycolytic pathway to the tricarboxylic cycle. The sequence is that of Pyruvate dehydrogenase E1 component subunit beta, mitochondrial (PDHB) from Pongo abelii (Sumatran orangutan).